The chain runs to 353 residues: Quinolinate synthase (353 aa).

Positions 47 and 68 each coordinate iminosuccinate. C113 provides a ligand contact to [4Fe-4S] cluster. Residues 139–141 (YAN) and S156 each bind iminosuccinate. Residue C200 participates in [4Fe-4S] cluster binding. Residues 226 to 228 (HPE) and T243 contribute to the iminosuccinate site. Residue C297 participates in [4Fe-4S] cluster binding.

This sequence belongs to the quinolinate synthase family. Type 1 subfamily. It depends on [4Fe-4S] cluster as a cofactor.

Its subcellular location is the cytoplasm. It carries out the reaction iminosuccinate + dihydroxyacetone phosphate = quinolinate + phosphate + 2 H2O + H(+). Its pathway is cofactor biosynthesis; NAD(+) biosynthesis; quinolinate from iminoaspartate: step 1/1. Functionally, catalyzes the condensation of iminoaspartate with dihydroxyacetone phosphate to form quinolinate. This is Quinolinate synthase from Pectobacterium atrosepticum (strain SCRI 1043 / ATCC BAA-672) (Erwinia carotovora subsp. atroseptica).